The chain runs to 758 residues: Spastin (758 aa).

The segment at 1–99 (MVRTKNQSSS…PTTCSPRSGH (99 aa)) is disordered. Topologically, residues 1–121 (MVRTKNQSSS…KQNLYVVSFP (121 aa)) are cytoplasmic. The segment at 1–210 (MVRTKNQSSS…RPIQPLEMAA (210 aa)) is required for localization to punctate cytoplasmic foci. Composition is skewed to low complexity over residues 8–29 (SSSS…SATG), 43–58 (RSSS…AGGS), 66–76 (SSNRRSPGSSP), and 85–95 (TDDLTPTTCSP). An intramembrane region (helical) is located at residues 122–142 (IIFLFNVLRSLIYQLFCIFRY). At 143-758 (LYGASTKVIY…WSQDYGDITI (616 aa)) the chain is on the cytoplasmic side. Polar residues-rich tracts occupy residues 169-180 (SKEQQQSLNHPS) and 189-198 (QEQQLSNQPQ). The tract at residues 169–221 (SKEQQQSLNHPSELNRDSDGQEQQLSNQPQRFRPIQPLEMAANRPGGGYSPGP) is disordered. The sufficient for interaction with microtubules and microtubule severing stretch occupies residues 208-758 (MAANRPGGGY…WSQDYGDITI (551 aa)). Positions 233 to 308 (HRRAFEYISK…SMARDRLHFL (76 aa)) constitute an MIT domain. Disordered stretches follow at residues 353 to 376 (RVRS…GRKL) and 390 to 454 (NKSQ…ASTP). Composition is skewed to polar residues over residues 390-406 (NKSQ…TSVG) and 425-454 (QFSS…ASTP). The required for interaction with microtubules stretch occupies residues 443–455 (NNGPSGSGASTPV). 523–530 (GPPGNGKT) is a binding site for ATP.

Belongs to the AAA ATPase family. Spastin subfamily. As to quaternary structure, homohexamer. The homohexamer is stabilized by ATP-binding. The homohexamer may adopt a ring conformation through which microtubules pass prior to being severed. Interacts with microtubules. Interacts with atl; may be involved in microtubule dynamics.

The protein resides in the membrane. Its subcellular location is the cytoplasm. It is found in the cytoskeleton. The protein localises to the microtubule organizing center. It localises to the centrosome. The protein resides in the chromosome. Its subcellular location is the lipid droplet. The catalysed reaction is n ATP + n H2O + a microtubule = n ADP + n phosphate + (n+1) alpha/beta tubulin heterodimers.. In terms of biological role, ATP-dependent microtubule severing protein. Stimulates microtubule minus-end depolymerization and poleward microtubule flux in the mitotic spindle. Regulates microtubule stability in the neuromuscular junction synapse. Involved in lipid metabolism by regulating the size and distribution of lipid droplets. Involved in axon regeneration by regulating microtubule severing. The protein is Spastin of Drosophila yakuba (Fruit fly).